The sequence spans 528 residues: Phosphoenolpyruvate carboxykinase (ATP) (528 aa).

Substrate is bound by residues Arg56, Tyr192, and Lys198. Residues Lys198, His217, and 233–241 (GLSGTGKTT) each bind ATP. The Mn(2+) site is built by Lys198 and His217. Asp254 contributes to the Mn(2+) binding site. ATP contacts are provided by Glu282, Arg319, and Thr444. A substrate-binding site is contributed by Arg319.

This sequence belongs to the phosphoenolpyruvate carboxykinase (ATP) family. Mn(2+) is required as a cofactor.

The protein resides in the cytoplasm. It catalyses the reaction oxaloacetate + ATP = phosphoenolpyruvate + ADP + CO2. It participates in carbohydrate biosynthesis; gluconeogenesis. Functionally, involved in the gluconeogenesis. Catalyzes the conversion of oxaloacetate (OAA) to phosphoenolpyruvate (PEP) through direct phosphoryl transfer between the nucleoside triphosphate and OAA. This chain is Phosphoenolpyruvate carboxykinase (ATP), found in Geobacillus kaustophilus (strain HTA426).